Consider the following 302-residue polypeptide: Melibiose operon regulatory protein (302 aa).

Positions 194–292 (SQMLGFIAEN…GMSPQQYRKL (99 aa)) constitute an HTH araC/xylS-type domain. 2 DNA-binding regions (H-T-H motif) span residues 211 to 232 (NDVAEHVKLNANYAMGIFQRVM) and 259 to 282 (ILDIALTAGFRSSSRFYSTFGKYV).

Its function is as follows. Transcription activator for the expression of the melAB operon. MelR binds at two sites located upstream of the melAB transcription site. In Escherichia coli O6:H1 (strain CFT073 / ATCC 700928 / UPEC), this protein is Melibiose operon regulatory protein (melR).